A 245-amino-acid polypeptide reads, in one-letter code: Phycocyanobilin:ferredoxin oxidoreductase (245 aa).

Belongs to the HY2 family.

It catalyses the reaction (2R,3Z)-phycocyanobilin + 4 oxidized [2Fe-2S]-[ferredoxin] = biliverdin IXalpha + 4 reduced [2Fe-2S]-[ferredoxin] + 4 H(+). Functionally, catalyzes the four-electron reduction of biliverdin IX-alpha (2-electron reduction at both the A and D rings); the reaction proceeds via an isolatable 2-electron intermediate, 181,182-dihydrobiliverdin. This is Phycocyanobilin:ferredoxin oxidoreductase from Rippkaea orientalis (strain PCC 8801 / RF-1) (Cyanothece sp. (strain PCC 8801)).